We begin with the raw amino-acid sequence, 96 residues long: Co-chaperonin GroES (96 aa).

The protein belongs to the GroES chaperonin family. In terms of assembly, heptamer of 7 subunits arranged in a ring. Interacts with the chaperonin GroEL.

It localises to the cytoplasm. Functionally, together with the chaperonin GroEL, plays an essential role in assisting protein folding. The GroEL-GroES system forms a nano-cage that allows encapsulation of the non-native substrate proteins and provides a physical environment optimized to promote and accelerate protein folding. GroES binds to the apical surface of the GroEL ring, thereby capping the opening of the GroEL channel. This chain is Co-chaperonin GroES, found in Shewanella oneidensis (strain ATCC 700550 / JCM 31522 / CIP 106686 / LMG 19005 / NCIMB 14063 / MR-1).